Reading from the N-terminus, the 165-residue chain is Phosphopantetheine adenylyltransferase (165 aa).

Residue S10 participates in substrate binding. ATP-binding positions include 10 to 11 and H18; that span reads SF. The substrate site is built by K42, T79, and R93. Residues 94–96, E104, and 129–135 contribute to the ATP site; these read GLR and VRPITAT.

The protein belongs to the bacterial CoaD family. In terms of assembly, homohexamer. It depends on Mg(2+) as a cofactor.

It is found in the cytoplasm. It catalyses the reaction (R)-4'-phosphopantetheine + ATP + H(+) = 3'-dephospho-CoA + diphosphate. It functions in the pathway cofactor biosynthesis; coenzyme A biosynthesis; CoA from (R)-pantothenate: step 4/5. Reversibly transfers an adenylyl group from ATP to 4'-phosphopantetheine, yielding dephospho-CoA (dPCoA) and pyrophosphate. This is Phosphopantetheine adenylyltransferase from Rhodopseudomonas palustris (strain BisB5).